We begin with the raw amino-acid sequence, 359 residues long: DNA replication and repair protein RecF (359 aa).

30-37 contributes to the ATP binding site; the sequence is GANGSGKT.

This sequence belongs to the RecF family.

Its subcellular location is the cytoplasm. The RecF protein is involved in DNA metabolism; it is required for DNA replication and normal SOS inducibility. RecF binds preferentially to single-stranded, linear DNA. It also seems to bind ATP. The sequence is that of DNA replication and repair protein RecF from Vibrio atlanticus (strain LGP32) (Vibrio splendidus (strain Mel32)).